The primary structure comprises 433 residues: FAD-dependent monooxygenase notI (433 aa).

FAD is bound by residues E45 and R117. R195 is an active-site residue. Residues D314 and A327 each coordinate FAD.

This sequence belongs to the paxM FAD-dependent monooxygenase family. FAD is required as a cofactor.

It participates in alkaloid biosynthesis. Its function is as follows. FAD-dependent monooxygenase; part of the gene cluster that mediates the biosynthesis of notoamide, a fungal indole alkaloid that belongs to a family of natural products containing a characteristic bicyclo[2.2.2]diazaoctane core. The first step of notoamide biosynthesis involves coupling of L-proline and L-tryptophan by the bimodular NRPS notE, to produce cyclo-L-tryptophan-L-proline called brevianamide F. The reverse prenyltransferase notF then acts as a deoxybrevianamide E synthase and converts brevianamide F to deoxybrevianamide E via reverse prenylation at C-2 of the indole ring leading to the bicyclo[2.2.2]diazaoctane core. Deoxybrevianamide E is further hydroxylated at C-6 of the indole ring, likely catalyzed by the cytochrome P450 monooxygenase notG, to yield 6-hydroxy-deoxybrevianamide E. 6-hydroxy-deoxybrevianamide E is a specific substrate of the prenyltransferase notC for normal prenylation at C-7 to produce 6-hydroxy-7-prenyl-deoxybrevianamide, also called notoamide S. As the proposed pivotal branching point in notoamide biosynthesis, notoamide S can be diverted to notoamide E through an oxidative pyran ring closure putatively catalyzed by either notH cytochrome P450 monooxygenase or the notD FAD-linked oxidoreductase. This step would be followed by an indole 2,3-epoxidation-initiated pinacol-like rearrangement catalyzed by the notB FAD-dependent monooxygenase leading to the formation of notoamide C and notoamide D. On the other hand notoamide S is converted to notoamide T by notH (or notD), a bifunctional oxidase that also functions as the intramolecular Diels-Alderase responsible for generation of (+)-notoamide T. To generate antipodal (-)-notoaminide T, notH' (or notD') in Aspergillus versicolor is expected to catalyze a Diels-Alder reaction leading to the opposite stereochemistry. The remaining oxidoreductase notD (or notH) likely catalyzes the oxidative pyran ring formation to yield (+)-stephacidin A. The FAD-dependent monooxygenase notI is highly similar to notB and is predicted to catalyze a similar conversion from (+)-stephacidin A to (-)-notoamide B via the 2,3-epoxidation of (+)-stephacidin A followed by a pinacol-type rearrangement. Finally, it remains unclear which enzyme could be responsible for the final hydroxylation steps leading to notoamide A and sclerotiamide. The protein is FAD-dependent monooxygenase notI of Aspergillus sp. (strain MF297-2).